The following is a 404-amino-acid chain: MLPTLYTCLLWLSTSGLWTVQAKGSDTDMSTRNPHRDLAPNNVDFAFTLYKHLVASAPGKNVFISPVSISTALAMLSLGARGYTREQLLQGLGFNLTEMSEGEIHRAFRHLHHLLRESNTTLDMTMGNALFLDHSLELLESFSADTKHYYELEALTTDFQDWAGASRQINEYIKNKTQGNIVDLFSESDSSATLILVNYIFFKGMWAHSFDLESTREENFHVNEATTVQVPMMFQSNTIKYLNDSVLPCQLVQLDYTGNETVFFVLPVKGKMDSVITALSRDTIQRWSKSLTMSQVDLYIPKISISGAYDLGGIMGDMGIADLLSNRTHFSGITQEALPKVSKVVHKAALQVDEKGLEADAPTRVSLSAAPGPLTLRFNRPFIIMIFDDFTWSSLFLGKVVNPT.

The N-terminal stretch at 1–22 (MLPTLYTCLLWLSTSGLWTVQA) is a signal peptide. N-linked (GlcNAc...) asparagine glycans are attached at residues N95, N119, and N175. Q253 provides a ligand contact to cortisol. An N-linked (GlcNAc...) asparagine glycan is attached at N259. Cortisol is bound at residue Q285. N326 is a glycosylation site (N-linked (GlcNAc...) asparagine). W392 lines the cortisol pocket.

This sequence belongs to the serpin family. In terms of processing, glycosylation in position Asn-259 is needed for steroid binding.

The protein resides in the secreted. In terms of biological role, major transport protein for glucocorticoids and progestins in the blood of almost all vertebrate species. This chain is Corticosteroid-binding globulin (SERPINA6), found in Bos taurus (Bovine).